The primary structure comprises 433 residues: MRVFKGEVTALPPDKSISHRAALIGALSEGTTEIMNFSGGFDNQSTLGVLKDAGITLRQELLEGADGRTVRQVIIESKGLWSFQPPSAPLMCNNSGSTMRMFAGILAAQPFASELIGDSSLMKRPMKRVADPLRQMGADLQLSPSGTAPICIKGSKELKPINYRLPVPSAQVKSLVAFAALHADGESRIIESVRSRDHTEVMLGLDSFEQDGERVIVVPGRKTVAAKPFYIPADPSAACFIVALGLLARGSEIIIRDVCLNPTRAAFLNILTDAGACLTIENQRVIGGETIGDILVENHAALEPLLITDPQLVAFIIDEIPMLAVLSAFASGRFELHNAAELRTKESDRIDALVVNLQRLGFDCEQYPDGFVVKGRRITPSGTVVIDSFDDHRIAMSFAIAGKATGCPIDLSDIDVVGVSFPNFFDLLDSLQV.

The 3-phosphoshikimate site is built by Lys15, Ser16, and Arg20. Lys15 provides a ligand contact to phosphoenolpyruvate. Residues Gly96 and Arg124 each contribute to the phosphoenolpyruvate site. 5 residues coordinate 3-phosphoshikimate: Ser169, Gln171, Ser195, Asp318, and Lys345. Residue Gln171 coordinates phosphoenolpyruvate. Catalysis depends on Asp318, which acts as the Proton acceptor. 2 residues coordinate phosphoenolpyruvate: Arg349 and Arg393.

The protein belongs to the EPSP synthase family. As to quaternary structure, monomer.

The protein localises to the cytoplasm. The enzyme catalyses 3-phosphoshikimate + phosphoenolpyruvate = 5-O-(1-carboxyvinyl)-3-phosphoshikimate + phosphate. Its pathway is metabolic intermediate biosynthesis; chorismate biosynthesis; chorismate from D-erythrose 4-phosphate and phosphoenolpyruvate: step 6/7. Catalyzes the transfer of the enolpyruvyl moiety of phosphoenolpyruvate (PEP) to the 5-hydroxyl of shikimate-3-phosphate (S3P) to produce enolpyruvyl shikimate-3-phosphate and inorganic phosphate. This chain is 3-phosphoshikimate 1-carboxyvinyltransferase, found in Pelodictyon phaeoclathratiforme (strain DSM 5477 / BU-1).